We begin with the raw amino-acid sequence, 360 residues long: Peptide chain release factor 1 (360 aa).

The residue at position 233 (glutamine 233) is an N5-methylglutamine. The interval 283-305 (KLDAERAADRRSQVGSGDRSERI) is disordered.

Belongs to the prokaryotic/mitochondrial release factor family. Post-translationally, methylated by PrmC. Methylation increases the termination efficiency of RF1.

It localises to the cytoplasm. Peptide chain release factor 1 directs the termination of translation in response to the peptide chain termination codons UAG and UAA. The sequence is that of Peptide chain release factor 1 from Methylocella silvestris (strain DSM 15510 / CIP 108128 / LMG 27833 / NCIMB 13906 / BL2).